The primary structure comprises 256 residues: Flap endonuclease Xni (256 aa).

Aspartate 105 lines the Mg(2+) pocket. The 5'-3' exonuclease domain maps to serine 164–valine 250. The K(+) site is built by methionine 172, alanine 173, proline 181, isoleucine 183, and isoleucine 186. Residues glycine 185–serine 190 are interaction with DNA.

This sequence belongs to the Xni family. Mg(2+) serves as cofactor. It depends on K(+) as a cofactor.

Has flap endonuclease activity. During DNA replication, flap endonucleases cleave the 5'-overhanging flap structure that is generated by displacement synthesis when DNA polymerase encounters the 5'-end of a downstream Okazaki fragment. This chain is Flap endonuclease Xni, found in Shewanella loihica (strain ATCC BAA-1088 / PV-4).